Here is a 353-residue protein sequence, read N- to C-terminus: UPF0283 membrane protein KPN78578_12740 (353 aa).

3 consecutive transmembrane segments (helical) span residues 70 to 90 (MVSA…VQWT), 99 to 119 (WIAL…VGSL), and 213 to 233 (ESTL…FIAW).

This sequence belongs to the UPF0283 family.

The protein resides in the cell inner membrane. The polypeptide is UPF0283 membrane protein KPN78578_12740 (Klebsiella pneumoniae subsp. pneumoniae (strain ATCC 700721 / MGH 78578)).